The primary structure comprises 320 residues: MRQTKTGILLANLGTPDAPTPEAVKRYLKQFLSDRRVVDTSRLLWWPLLRGVILPLRSPRVAKLYASVWMEDGSPLMVYSRQQQQALAQRLPDTPVALGMSYGSPSLESAVDELLAEHVDHIVVLPLYPQFSCSTVGAVWDELARILARKRSIPGISFIRDYADNHDYINALANSVRASFAKHGEPDLLLLSYHGIPQRYADEGDDYPQRCRTTTRELASALGMAPEKVMMTFQSRFGREPWLMPYTDETLKMLGEKGVGHIQVMCPGFAADCLETLEEIAEQNREVFLGAGGKKYEYIPALNATPEHIEMMANLVAAYR.

Fe cation contacts are provided by His194 and Glu275.

The protein belongs to the ferrochelatase family. As to quaternary structure, monomer.

Its subcellular location is the cytoplasm. The catalysed reaction is heme b + 2 H(+) = protoporphyrin IX + Fe(2+). Its pathway is porphyrin-containing compound metabolism; protoheme biosynthesis; protoheme from protoporphyrin-IX: step 1/1. Functionally, catalyzes the ferrous insertion into protoporphyrin IX. This Escherichia coli (strain 55989 / EAEC) protein is Ferrochelatase.